Here is a 283-residue protein sequence, read N- to C-terminus: Circadian clock oscillator protein KaiA (283 aa).

Positions 1–146 (MAQSTALTIC…LFRLPALKES (146 aa)) are psR domain, not required to form KaiA:KaiB:KaiC complex, or for a full KaiC phosphorylation cycle. Residues 3–163 (QSTALTICGL…RLSQKLKERL (161 aa)) form the KaiA N-terminal domain. The segment at 164-172 (GYLGVYYKR) is flexible linker. A KaiA C-terminal domain is found at 173–281 (DTAFFFRRMS…CEMYRRSIPR (109 aa)).

The protein belongs to the KaiA family. As to quaternary structure, homodimer. The KaiABC complex composition changes during the circadian cycle to control KaiC phosphorylation. Complexes KaiC(6), KaiA(2-4):KaiC(6), KaiB(6):KaiC(6) and KaiC(6):KaiB(6):KaiA(12) are among the most important forms, many form cooperatively. Binds to KaiB and KaiC, the N-terminus (pseudoreceiver domain PsR) is not required for either interaction. 1 KaiB binds to one subunit of the KaiA homodimer. KaiA and CikA bind to the same region of the KaiB(fs) form and therefore compete.

In terms of biological role, key component of the KaiABC oscillator complex, which constitutes the main circadian regulator in cyanobacteria. Complex composition changes during the circadian cycle to control KaiC phosphorylation. KaiA stimulates KaiC autophosphorylation, while KaiB sequesters KaiA, leading to KaiC autodephosphorylation. KaiA binding to the KaiC CII domain during the subjective day yields KaiA(2-4):KaiC(6) complexes which stimulate KaiC autophosphorylation. Phospho-Ser-431 KaiC accumulation triggers binding of KaiB during the subjective night to form the KaiB(6):KaiC(6) complex, leading to changes in the output regulators CikA and SasA. KaiB(6):KaiC(6) formation exposes a site for KaiA binding on KaiB that sequesters KaiA from KaiC's CII domain, making the KaiC(6):KaiB(6):KaiA(12) complex resulting in KaiC autodephosphorylation. Complete dephosphorylation of KaiC leads to dissociation of KaiA(2):KaiB(1), completing 1 cycle of the Kai oscillator. Formation of the KaiB:KaiC complex is promoted by KaiA, helping switch KaiC from its autophosphorylation to autodephosphatase function. Functionally, binds oxidized quinones via the N-terminal PsR domain, allowing it to sense redox changes and possibly mediate clock input. This is Circadian clock oscillator protein KaiA from Thermosynechococcus vestitus (strain NIES-2133 / IAM M-273 / BP-1).